The primary structure comprises 76 residues: MKADIHPQYHLVKVVMTDGTEFLTRSTYGSEGATLNLDIDPKTHPAWTGGSAQLLDRGGRLSRFNSRFSGLSFGKK.

The protein belongs to the bacterial ribosomal protein bL31 family. Type A subfamily. Part of the 50S ribosomal subunit.

Its function is as follows. Binds the 23S rRNA. In Methylocella silvestris (strain DSM 15510 / CIP 108128 / LMG 27833 / NCIMB 13906 / BL2), this protein is Large ribosomal subunit protein bL31.